Reading from the N-terminus, the 416-residue chain is Formyl-CoA:oxalate CoA-transferase (416 aa).

CoA contacts are provided by residues 17 to 18 (QS), R38, 72 to 75 (LNTK), 96 to 98 (NFH), H104, and 137 to 140 (KAYE). The active-site Nucleophile is the D169. 248-250 (GGQ) lines the substrate pocket. Position 273–275 (273–275 (QEQ)) interacts with CoA.

This sequence belongs to the CoA-transferase III family. Frc subfamily. In terms of assembly, homodimer.

It catalyses the reaction formyl-CoA + oxalate = oxalyl-CoA + formate. The protein operates within metabolic intermediate degradation; oxalate degradation; CO(2) and formate from oxalate: step 1/2. Its function is as follows. Involved in the catabolism of oxalate and in the adapatation to low pH via the induction of the oxalate-dependent acid tolerance response (ATR). Catalyzes the transfer of the CoA moiety from formyl-CoA to oxalate. This chain is Formyl-CoA:oxalate CoA-transferase, found in Shigella boydii serotype 18 (strain CDC 3083-94 / BS512).